The chain runs to 179 residues: MSRIGKIPVTVPGGVDVSIDGQDVTVKGPKGSLALTISEPIAIAKNDDGTLSVTRPDDERRSRALHGLSRTLVQNLITGVTDGYTTKMEIHGVGYRVALKGKDLEFALGYSHPVPIEAPEGITFAVESPTKFSVSGIDKQKVGQISANIRRLRRPDPYKGKGVRYEGEQIRRKVGKTGK.

It belongs to the universal ribosomal protein uL6 family. As to quaternary structure, part of the 50S ribosomal subunit.

This protein binds to the 23S rRNA, and is important in its secondary structure. It is located near the subunit interface in the base of the L7/L12 stalk, and near the tRNA binding site of the peptidyltransferase center. In Rhodococcus jostii (strain RHA1), this protein is Large ribosomal subunit protein uL6.